The chain runs to 354 residues: Dual-specificity RNA methyltransferase RlmN (354 aa).

The Proton acceptor role is filled by Glu-86. Residues Arg-105–Asp-338 enclose the Radical SAM core domain. Cys-112 and Cys-343 are oxidised to a cystine. Positions 119, 123, and 126 each coordinate [4Fe-4S] cluster. Residues Gly-169–Glu-170, Ser-201, Ser-224–His-226, and Asn-300 contribute to the S-adenosyl-L-methionine site. The active-site S-methylcysteine intermediate is the Cys-343.

The protein belongs to the radical SAM superfamily. RlmN family. Requires [4Fe-4S] cluster as cofactor.

It localises to the cytoplasm. It carries out the reaction adenosine(2503) in 23S rRNA + 2 reduced [2Fe-2S]-[ferredoxin] + 2 S-adenosyl-L-methionine = 2-methyladenosine(2503) in 23S rRNA + 5'-deoxyadenosine + L-methionine + 2 oxidized [2Fe-2S]-[ferredoxin] + S-adenosyl-L-homocysteine. The catalysed reaction is adenosine(37) in tRNA + 2 reduced [2Fe-2S]-[ferredoxin] + 2 S-adenosyl-L-methionine = 2-methyladenosine(37) in tRNA + 5'-deoxyadenosine + L-methionine + 2 oxidized [2Fe-2S]-[ferredoxin] + S-adenosyl-L-homocysteine. Specifically methylates position 2 of adenine 2503 in 23S rRNA and position 2 of adenine 37 in tRNAs. m2A2503 modification seems to play a crucial role in the proofreading step occurring at the peptidyl transferase center and thus would serve to optimize ribosomal fidelity. In Campylobacter fetus subsp. fetus (strain 82-40), this protein is Dual-specificity RNA methyltransferase RlmN.